Reading from the N-terminus, the 308-residue chain is MLPTLSVFFMLTFVLLCFLGILANGFIVLMLSREWLLRGRLLPSDMILFSLGTSRFFQQCVGLVNSFYYFLHLVEYSGSLARQLISLHWDFLNSATFWFCTWLSVLFCIKIANFSHPAFLWLKWRFPALVPWFLLGSILVSVIVTLLFFWGNHTIYQAFLRRKFTGNTTFKEWNRRLEIDYFMPLKVVTMSIPCSLFLVSILLLISSLRRHSLRMQHNTHSLQDPNVQAHSRALKSLISFLVLYAVSFVSMIIDATVFISSDNVWYWPWQIILYFCMSVHPFILITNNLRFRGTFRQLLLLARGFWVA.

Residues 1-7 (MLPTLSV) lie on the Extracellular side of the membrane. The helical transmembrane segment at 8–28 (FFMLTFVLLCFLGILANGFIV) threads the bilayer. Over 29-60 (LMLSREWLLRGRLLPSDMILFSLGTSRFFQQC) the chain is Cytoplasmic. A helical transmembrane segment spans residues 61–81 (VGLVNSFYYFLHLVEYSGSLA). Over 82–88 (RQLISLH) the chain is Extracellular. Residues 89–109 (WDFLNSATFWFCTWLSVLFCI) traverse the membrane as a helical segment. At 110–128 (KIANFSHPAFLWLKWRFPA) the chain is on the cytoplasmic side. A helical transmembrane segment spans residues 129–149 (LVPWFLLGSILVSVIVTLLFF). Residues 150–186 (WGNHTIYQAFLRRKFTGNTTFKEWNRRLEIDYFMPLK) are Extracellular-facing. Residues Asn152 and Asn167 are each glycosylated (N-linked (GlcNAc...) asparagine). The chain crosses the membrane as a helical span at residues 187–207 (VVTMSIPCSLFLVSILLLISS). At 208–239 (LRRHSLRMQHNTHSLQDPNVQAHSRALKSLIS) the chain is on the cytoplasmic side. A helical membrane pass occupies residues 240–260 (FLVLYAVSFVSMIIDATVFIS). The Extracellular portion of the chain corresponds to 261-264 (SDNV). Residues 265–285 (WYWPWQIILYFCMSVHPFILI) traverse the membrane as a helical segment. Over 286–308 (TNNLRFRGTFRQLLLLARGFWVA) the chain is Cytoplasmic.

The protein belongs to the G-protein coupled receptor T2R family. In terms of tissue distribution, expressed in subsets of taste receptor cells of the tongue and palate epithelium and exclusively in gustducin-positive cells.

It localises to the membrane. Its function is as follows. Receptor that may play a role in the perception of bitterness and is gustducin-linked. May play a role in sensing the chemical composition of the gastrointestinal content. The activity of this receptor may stimulate alpha gustducin, mediate PLC-beta-2 activation and lead to the gating of TRPM5. The sequence is that of Taste receptor type 2 member 41 (Tas2r41) from Mus musculus (Mouse).